The following is a 1173-amino-acid chain: Inner capsid protein VP3 (1173 aa).

The disordered stretch occupies residues 1 to 53 (MSNLPKPASHFEPEKNVDDKGNVTGSAPPVSKDTPTQQASVSLPNQEEPTQQT). The span at 9–21 (SHFEPEKNVDDKG) shows a compositional bias: basic and acidic residues. Positions 33-53 (DTPTQQASVSLPNQEEPTQQT) are enriched in polar residues.

This sequence belongs to the turreted BTV-fold inner capsid family. As to quaternary structure, homodecamer; each decamer is made up of two conformers of VP2, called VP2A and VP2B. 12 homodecamers assemble to form an icosahedral capsid.

It is found in the virion. Inner capsid protein that self-assembles to form an icosahedral capsid with a T=2 symmetry, which consists of 120 copies of VP2, with channels at each of its five-fold vertices. This capsid constitutes the innermost concentric layer of the viral mature particle. The chain is Inner capsid protein VP3 from Rice ragged stunt virus (isolate Thailand) (RRSV).